A 272-amino-acid polypeptide reads, in one-letter code: Dermonecrotic toxin LvSicTox-alphaIC1bv (272 aa).

His-5 is a catalytic residue. Positions 25 and 27 each coordinate Mg(2+). His-41 serves as the catalytic Nucleophile. Intrachain disulfides connect Cys-45–Cys-51 and Cys-47–Cys-189. Asp-84 provides a ligand contact to Mg(2+).

This sequence belongs to the arthropod phospholipase D family. Class II subfamily. Mg(2+) serves as cofactor. Expressed by the venom gland.

Its subcellular location is the secreted. The enzyme catalyses an N-(acyl)-sphingosylphosphocholine = an N-(acyl)-sphingosyl-1,3-cyclic phosphate + choline. It catalyses the reaction an N-(acyl)-sphingosylphosphoethanolamine = an N-(acyl)-sphingosyl-1,3-cyclic phosphate + ethanolamine. It carries out the reaction a 1-acyl-sn-glycero-3-phosphocholine = a 1-acyl-sn-glycero-2,3-cyclic phosphate + choline. The catalysed reaction is a 1-acyl-sn-glycero-3-phosphoethanolamine = a 1-acyl-sn-glycero-2,3-cyclic phosphate + ethanolamine. Its function is as follows. Dermonecrotic toxins cleave the phosphodiester linkage between the phosphate and headgroup of certain phospholipids (sphingolipid and lysolipid substrates), forming an alcohol (often choline) and a cyclic phosphate. This toxin acts on sphingomyelin (SM). It may also act on ceramide phosphoethanolamine (CPE), lysophosphatidylcholine (LPC) and lysophosphatidylethanolamine (LPE), but not on lysophosphatidylserine (LPS), and lysophosphatidylglycerol (LPG). It acts by transphosphatidylation, releasing exclusively cyclic phosphate products as second products. Induces dermonecrosis, hemolysis, increased vascular permeability, edema, inflammatory response, and platelet aggregation. The protein is Dermonecrotic toxin LvSicTox-alphaIC1bv of Loxosceles variegata (Recluse spider).